A 152-amino-acid polypeptide reads, in one-letter code: UPF0266 membrane protein YobD (152 aa).

Helical transmembrane passes span 6 to 26, 45 to 65, and 67 to 87; these read LVLI…QFIM, IDSV…VTNH, and AQIT…IFWI.

Belongs to the UPF0266 family.

The protein resides in the cell inner membrane. The protein is UPF0266 membrane protein YobD of Escherichia fergusonii (strain ATCC 35469 / DSM 13698 / CCUG 18766 / IAM 14443 / JCM 21226 / LMG 7866 / NBRC 102419 / NCTC 12128 / CDC 0568-73).